The following is a 517-amino-acid chain: GMP synthase [glutamine-hydrolyzing] (517 aa).

The Glutamine amidotransferase type-1 domain occupies 9 to 199; that stretch reads RILILDFGSQ…VLGVCGCERL (191 aa). Residue cysteine 86 is the Nucleophile of the active site. Residues histidine 173 and glutamate 175 contribute to the active site. Positions 200–392 constitute a GMPS ATP-PPase domain; sequence WTSESIIEDA…LGLPYNMLYR (193 aa). 227-233 is an ATP binding site; that stretch reads SGGVDSS.

Homodimer.

The catalysed reaction is XMP + L-glutamine + ATP + H2O = GMP + L-glutamate + AMP + diphosphate + 2 H(+). It participates in purine metabolism; GMP biosynthesis; GMP from XMP (L-Gln route): step 1/1. In terms of biological role, catalyzes the synthesis of GMP from XMP. This is GMP synthase [glutamine-hydrolyzing] from Vibrio cholerae serotype O1 (strain ATCC 39541 / Classical Ogawa 395 / O395).